We begin with the raw amino-acid sequence, 921 residues long: DNA ligase (921 aa).

NAD(+) contacts are provided by residues aspartate 90–aspartate 94, serine 139–leucine 140, and glutamate 173. Catalysis depends on lysine 175, which acts as the N6-AMP-lysine intermediate. Residues arginine 196, glutamate 235, lysine 360, and lysine 384 each contribute to the NAD(+) site. Cysteine 481, cysteine 484, cysteine 500, and cysteine 506 together coordinate Zn(2+). A disordered region spans residues glutamate 663 to alanine 688. A BRCT domain is found at serine 839–aspartate 921.

The protein belongs to the NAD-dependent DNA ligase family. LigA subfamily. The cofactor is Mg(2+). It depends on Mn(2+) as a cofactor.

The catalysed reaction is NAD(+) + (deoxyribonucleotide)n-3'-hydroxyl + 5'-phospho-(deoxyribonucleotide)m = (deoxyribonucleotide)n+m + AMP + beta-nicotinamide D-nucleotide.. DNA ligase that catalyzes the formation of phosphodiester linkages between 5'-phosphoryl and 3'-hydroxyl groups in double-stranded DNA using NAD as a coenzyme and as the energy source for the reaction. It is essential for DNA replication and repair of damaged DNA. The polypeptide is DNA ligase (Bifidobacterium longum subsp. infantis (strain ATCC 15697 / DSM 20088 / JCM 1222 / NCTC 11817 / S12)).